The primary structure comprises 397 residues: Tryptophan synthase beta chain (397 aa).

Lysine 91 carries the N6-(pyridoxal phosphate)lysine modification.

It belongs to the TrpB family. As to quaternary structure, tetramer of two alpha and two beta chains. Pyridoxal 5'-phosphate is required as a cofactor.

It catalyses the reaction (1S,2R)-1-C-(indol-3-yl)glycerol 3-phosphate + L-serine = D-glyceraldehyde 3-phosphate + L-tryptophan + H2O. It participates in amino-acid biosynthesis; L-tryptophan biosynthesis; L-tryptophan from chorismate: step 5/5. In terms of biological role, the beta subunit is responsible for the synthesis of L-tryptophan from indole and L-serine. The sequence is that of Tryptophan synthase beta chain from Bacillus cereus (strain ZK / E33L).